We begin with the raw amino-acid sequence, 230 residues long: Protein-L-isoaspartate O-methyltransferase (230 aa).

Residue serine 65 is part of the active site.

The protein belongs to the methyltransferase superfamily. L-isoaspartyl/D-aspartyl protein methyltransferase family. In terms of assembly, monomer. Highest contents in seeds.

The protein localises to the cytoplasm. It catalyses the reaction [protein]-L-isoaspartate + S-adenosyl-L-methionine = [protein]-L-isoaspartate alpha-methyl ester + S-adenosyl-L-homocysteine. Catalyzes the methyl esterification of L-isoaspartyl residues in peptides and proteins that result from spontaneous decomposition of normal L-aspartyl and L-asparaginyl residues. It plays a role in the repair and/or degradation of damaged proteins. This enzyme does not act on D-aspartyl residues. The polypeptide is Protein-L-isoaspartate O-methyltransferase (PCM) (Triticum aestivum (Wheat)).